The primary structure comprises 320 residues: Olfactory receptor 2W1 (320 aa).

Residues 1-25 are Extracellular-facing; that stretch reads MDQSNYSSLHGFILLGFSNHPKMEM. N5 carries N-linked (GlcNAc...) asparagine glycosylation. The helical transmembrane segment at 26-49 threads the bilayer; the sequence is ILSGVVAIFYLITLVGNTAIILAS. Residues 50–57 are Cytoplasmic-facing; it reads LLDSQLHT. A helical membrane pass occupies residues 58–79; sequence PMYFFLRNLSFLDLCFTTSIIP. The Extracellular segment spans residues 80 to 100; the sequence is QMLVNLWGPDKTISYVGCIIQ. C97 and C189 form a disulfide bridge. Residues 101–120 form a helical membrane-spanning segment; that stretch reads LYVYMWLGSVECLLLAVMSY. Over 121 to 139 the chain is Cytoplasmic; the sequence is DRFTAICKPLHYFVVMNPH. A helical membrane pass occupies residues 140–158; the sequence is LCLKMIIMIWSISLANSVV. Over 159 to 195 the chain is Extracellular; it reads LCTLTLNLPTCGNNILDHFLCELPALVKIACVDTTTV. The helical transmembrane segment at 196 to 219 threads the bilayer; sequence EMSVFALGIIIVLTPLILILISYG. Topologically, residues 220–236 are cytoplasmic; that stretch reads YIAKAVLRTKSKASQRK. Residues 237-259 traverse the membrane as a helical segment; the sequence is AMNTCGSHLTVVSMFYGTIIYMY. Residues 260 to 272 are Extracellular-facing; the sequence is LQPGNRASKDQGK. The chain crosses the membrane as a helical span at residues 273-292; that stretch reads FLTLFYTVITPSLNPLIYTL. Topologically, residues 293–320 are cytoplasmic; the sequence is RNKDMKDALKKLMRFHHKSTKIKRNCKS.

The protein belongs to the G-protein coupled receptor 1 family.

The protein resides in the cell membrane. In terms of biological role, odorant receptor. The protein is Olfactory receptor 2W1 (OR2W1) of Homo sapiens (Human).